A 520-amino-acid polypeptide reads, in one-letter code: MKEYWTSLASLLGVLAFCQSLMQSIFPPELRFAFLKFFNRIFHVFSSYCYFDITEIDGVNTNELYNAVQLYLSSSVSIAGNRLSLTRAVNSSSITFGLSNNDSIVDTFNGVTVLWEHVVTQRQTQTFAWRPLPEEKRGFTLRIKKKDKTLILNSYLDYIMERANEIRRKNQDRLLYTNSRGGSLDSRGHPWESVPFKHPSTFETLAMDPRKKQQIMDDLKDFAEGQVFYQKTGRAWKRGYLLYGPPGTGKSSMIAAMANYLGYDIYDLELTEVHSNSELRKLLMKTSSKSIIVIEDIDCSINLTNRKKNSSNVSSQRSYYDAETRNGSGSGSGGSGEEGGNGNTITLSGLLNFTDGLWSCCGSERIFVFTTNHIEKLDPALLRSGRMDMHIYMSFCNFPSLKILLKNYLGYGVEDINGDVLKEMEMVVEKAEMTPADVSEALIKNRRDKEKAIRELLEDLKSRGERNVKDGKLRGGSGNLTELEVVEEQEKRAIDSQNEDEDHDEEEIELEDNICKTRED.

The first 24 residues, 1–24, serve as a signal peptide directing secretion; sequence MKEYWTSLASLLGVLAFCQSLMQS. 244–251 contributes to the ATP binding site; it reads GPPGTGKS. Disordered stretches follow at residues 307–340 and 467–520; these read KKNS…EEGG and NVKD…TRED. A compositionally biased stretch (gly residues) spans 328-340; the sequence is SGSGSGGSGEEGG. A compositionally biased stretch (acidic residues) spans 497 to 512; it reads QNEDEDHDEEEIELED.

It belongs to the AAA ATPase family. BCS1 subfamily. Mg(2+) serves as cofactor.

The enzyme catalyses ATP + H2O = ADP + phosphate + H(+). The protein is AAA-ATPase At5g57480 of Arabidopsis thaliana (Mouse-ear cress).